The following is a 304-amino-acid chain: Ribosome-inactivating protein 9 (304 aa).

Residue Glu208 is part of the active site.

The protein belongs to the ribosome-inactivating protein family. Type 1 RIP subfamily. As to quaternary structure, monomer. In terms of tissue distribution, accumulates to high levels in seeds.

It is found in the cytoplasm. It catalyses the reaction Endohydrolysis of the N-glycosidic bond at one specific adenosine on the 28S rRNA.. Its function is as follows. Possesses features of some constitutive defense agent. The coordinate Opaque-2-controlled synthesis of this protein and the major seed storage proteins (zeins) may provide the germinating seedling with both nutritional benefits and protection against pathogen invasion of the surrounding endosperm. The protein is Ribosome-inactivating protein 9 (CRIP9) of Zea mays (Maize).